A 377-amino-acid chain; its full sequence is Queuine tRNA-ribosyltransferase (377 aa).

The active-site Proton acceptor is Asp-91. Substrate is bound by residues 91 to 95, Asp-145, Gln-189, and Gly-216; that span reads DSGGF. Residues 247 to 253 form an RNA binding region; it reads GVGKPED. Asp-266 acts as the Nucleophile in catalysis. The RNA binding; important for wobble base 34 recognition stretch occupies residues 271–275; it reads TRNAR. Positions 304, 306, 309, and 335 each coordinate Zn(2+).

It belongs to the queuine tRNA-ribosyltransferase family. Homodimer. Within each dimer, one monomer is responsible for RNA recognition and catalysis, while the other monomer binds to the replacement base PreQ1. The cofactor is Zn(2+).

It carries out the reaction 7-aminomethyl-7-carbaguanine + guanosine(34) in tRNA = 7-aminomethyl-7-carbaguanosine(34) in tRNA + guanine. The protein operates within tRNA modification; tRNA-queuosine biosynthesis. Its function is as follows. Catalyzes the base-exchange of a guanine (G) residue with the queuine precursor 7-aminomethyl-7-deazaguanine (PreQ1) at position 34 (anticodon wobble position) in tRNAs with GU(N) anticodons (tRNA-Asp, -Asn, -His and -Tyr). Catalysis occurs through a double-displacement mechanism. The nucleophile active site attacks the C1' of nucleotide 34 to detach the guanine base from the RNA, forming a covalent enzyme-RNA intermediate. The proton acceptor active site deprotonates the incoming PreQ1, allowing a nucleophilic attack on the C1' of the ribose to form the product. After dissociation, two additional enzymatic reactions on the tRNA convert PreQ1 to queuine (Q), resulting in the hypermodified nucleoside queuosine (7-(((4,5-cis-dihydroxy-2-cyclopenten-1-yl)amino)methyl)-7-deazaguanosine). In Vibrio parahaemolyticus serotype O3:K6 (strain RIMD 2210633), this protein is Queuine tRNA-ribosyltransferase.